We begin with the raw amino-acid sequence, 381 residues long: Cytochrome b (381 aa).

A run of 4 helical transmembrane segments spans residues 34–54 (FGSLLGLCLIIQIVTGLFLAM), 78–99 (WLIRNIHANGASLFFVCIYFHI), 114–134 (WNIGVILLFLLMATAFVGYVL), and 179–199 (FFAFHFLLPFLITALMIIHVL). Residues His-84 and His-98 each coordinate heme b. Residues His-183 and His-197 each coordinate heme b. Residue His-202 participates in a ubiquinone binding. Transmembrane regions (helical) follow at residues 227 to 247 (YKDALGFLTLLILLGVLALFL), 289 to 309 (LGGVLALLFSILILMLVPFLH), 321 to 341 (LTQIFFWTLVTNMLILTWIGG), and 348 to 368 (FILIGQIASISYFSLFLIALP).

Belongs to the cytochrome b family. In terms of assembly, the cytochrome bc1 complex contains 3 respiratory subunits (MT-CYB, CYC1 and UQCRFS1), 2 core proteins (UQCRC1 and UQCRC2) and probably 6 low-molecular weight proteins. Heme b serves as cofactor.

It is found in the mitochondrion inner membrane. Component of the ubiquinol-cytochrome c reductase complex (complex III or cytochrome b-c1 complex) that is part of the mitochondrial respiratory chain. The b-c1 complex mediates electron transfer from ubiquinol to cytochrome c. Contributes to the generation of a proton gradient across the mitochondrial membrane that is then used for ATP synthesis. The polypeptide is Cytochrome b (mt-cyb) (Isurus oxyrinchus (Shortfin mako shark)).